Reading from the N-terminus, the 629-residue chain is tRNA uridine 5-carboxymethylaminomethyl modification enzyme MnmG (629 aa).

FAD is bound by residues 14–19, Val-126, and Ser-181; that span reads GAGHAG. Residue 273–287 coordinates NAD(+); it reads GPRYCPSIEDKVVRF. Gln-370 provides a ligand contact to FAD.

Belongs to the MnmG family. In terms of assembly, homodimer. Heterotetramer of two MnmE and two MnmG subunits. FAD is required as a cofactor.

The protein resides in the cytoplasm. Functionally, NAD-binding protein involved in the addition of a carboxymethylaminomethyl (cmnm) group at the wobble position (U34) of certain tRNAs, forming tRNA-cmnm(5)s(2)U34. The chain is tRNA uridine 5-carboxymethylaminomethyl modification enzyme MnmG from Bacillus cereus (strain ATCC 14579 / DSM 31 / CCUG 7414 / JCM 2152 / NBRC 15305 / NCIMB 9373 / NCTC 2599 / NRRL B-3711).